Here is a 140-residue protein sequence, read N- to C-terminus: MAIERTFSIIKPDATRRNLTGAINAVIEKAGLRIVAQKRIQMTKAQAEAFYAVHSARPFFNDLVSFMTSGPVVVQVLEGEDAVAKYREVMGATNPANAAEGTIRKLFAESIEANSAHGSDSVENAGVEIAQFFSQNEIVG.

Residues Lys11, Phe59, Arg87, Thr93, Arg104, and Asn114 each coordinate ATP. The active-site Pros-phosphohistidine intermediate is the His117.

It belongs to the NDK family. Homotetramer. It depends on Mg(2+) as a cofactor.

It is found in the cytoplasm. The enzyme catalyses a 2'-deoxyribonucleoside 5'-diphosphate + ATP = a 2'-deoxyribonucleoside 5'-triphosphate + ADP. It carries out the reaction a ribonucleoside 5'-diphosphate + ATP = a ribonucleoside 5'-triphosphate + ADP. Its function is as follows. Major role in the synthesis of nucleoside triphosphates other than ATP. The ATP gamma phosphate is transferred to the NDP beta phosphate via a ping-pong mechanism, using a phosphorylated active-site intermediate. The polypeptide is Nucleoside diphosphate kinase (Azorhizobium caulinodans (strain ATCC 43989 / DSM 5975 / JCM 20966 / LMG 6465 / NBRC 14845 / NCIMB 13405 / ORS 571)).